A 242-amino-acid polypeptide reads, in one-letter code: tRNA (guanine-N(1)-)-methyltransferase (242 aa).

S-adenosyl-L-methionine is bound by residues glycine 112 and 131 to 136 (LGDFIL).

It belongs to the RNA methyltransferase TrmD family. Homodimer.

It is found in the cytoplasm. It catalyses the reaction guanosine(37) in tRNA + S-adenosyl-L-methionine = N(1)-methylguanosine(37) in tRNA + S-adenosyl-L-homocysteine + H(+). Functionally, specifically methylates guanosine-37 in various tRNAs. The protein is tRNA (guanine-N(1)-)-methyltransferase of Crocosphaera subtropica (strain ATCC 51142 / BH68) (Cyanothece sp. (strain ATCC 51142)).